A 254-amino-acid polypeptide reads, in one-letter code: Alcohol dehydrogenase 2 (254 aa).

NAD(+) is bound at residue 10 to 33 (FVAGLGGIGFDTSREIVKRGPKNL). Residue Ser138 participates in substrate binding. The Proton acceptor role is filled by Tyr151.

Belongs to the short-chain dehydrogenases/reductases (SDR) family. As to quaternary structure, homodimer.

It carries out the reaction a primary alcohol + NAD(+) = an aldehyde + NADH + H(+). The catalysed reaction is a secondary alcohol + NAD(+) = a ketone + NADH + H(+). This Drosophila mojavensis (Fruit fly) protein is Alcohol dehydrogenase 2 (Adh2).